We begin with the raw amino-acid sequence, 470 residues long: UDP-N-acetylmuramoylalanine--D-glutamate ligase (470 aa).

120–126 is a binding site for ATP; it reads GSNGKTT.

The protein belongs to the MurCDEF family.

Its subcellular location is the cytoplasm. The enzyme catalyses UDP-N-acetyl-alpha-D-muramoyl-L-alanine + D-glutamate + ATP = UDP-N-acetyl-alpha-D-muramoyl-L-alanyl-D-glutamate + ADP + phosphate + H(+). It functions in the pathway cell wall biogenesis; peptidoglycan biosynthesis. Cell wall formation. Catalyzes the addition of glutamate to the nucleotide precursor UDP-N-acetylmuramoyl-L-alanine (UMA). This is UDP-N-acetylmuramoylalanine--D-glutamate ligase from Nitrosomonas eutropha (strain DSM 101675 / C91 / Nm57).